The primary structure comprises 824 residues: Probable ion channel POLLUX (824 aa).

Positions 45-54 are enriched in low complexity; that stretch reads DGDDSSNLPT. The tract at residues 45–70 is disordered; the sequence is DGDDSSNLPTVPNPEEKPVPVPSQSP. The next 4 helical transmembrane spans lie at 81–101, 135–155, 198–218, and 250–270; these read FSLT…VMFL, AVVF…YMYL, LALL…LYAV, and IVSV…LGLI. RCK N-terminal domains lie at 291 to 432 and 550 to 699; these read SNHI…ETVV and PEKI…DKSI. Positions 325 to 346 form a coiled coil; it reads LAERDKEEMETDIAKFEFDLMG.

It belongs to the castor/pollux (TC 1.A.1.23) family.

The protein resides in the nucleus membrane. This chain is Probable ion channel POLLUX, found in Arabidopsis thaliana (Mouse-ear cress).